A 110-amino-acid chain; its full sequence is Large ribosomal subunit protein uL22 (110 aa).

Belongs to the universal ribosomal protein uL22 family. Part of the 50S ribosomal subunit.

Its function is as follows. This protein binds specifically to 23S rRNA; its binding is stimulated by other ribosomal proteins, e.g. L4, L17, and L20. It is important during the early stages of 50S assembly. It makes multiple contacts with different domains of the 23S rRNA in the assembled 50S subunit and ribosome. In terms of biological role, the globular domain of the protein is located near the polypeptide exit tunnel on the outside of the subunit, while an extended beta-hairpin is found that lines the wall of the exit tunnel in the center of the 70S ribosome. The sequence is that of Large ribosomal subunit protein uL22 from Paraburkholderia phytofirmans (strain DSM 17436 / LMG 22146 / PsJN) (Burkholderia phytofirmans).